A 270-amino-acid chain; its full sequence is Putative pyruvate, phosphate dikinase regulatory protein (270 aa).

153–160 (GVSRTSKT) lines the ADP pocket.

The protein belongs to the pyruvate, phosphate/water dikinase regulatory protein family. PDRP subfamily.

The catalysed reaction is N(tele)-phospho-L-histidyl/L-threonyl-[pyruvate, phosphate dikinase] + ADP = N(tele)-phospho-L-histidyl/O-phospho-L-threonyl-[pyruvate, phosphate dikinase] + AMP + H(+). It catalyses the reaction N(tele)-phospho-L-histidyl/O-phospho-L-threonyl-[pyruvate, phosphate dikinase] + phosphate + H(+) = N(tele)-phospho-L-histidyl/L-threonyl-[pyruvate, phosphate dikinase] + diphosphate. Functionally, bifunctional serine/threonine kinase and phosphorylase involved in the regulation of the pyruvate, phosphate dikinase (PPDK) by catalyzing its phosphorylation/dephosphorylation. This Halalkalibacterium halodurans (strain ATCC BAA-125 / DSM 18197 / FERM 7344 / JCM 9153 / C-125) (Bacillus halodurans) protein is Putative pyruvate, phosphate dikinase regulatory protein.